A 374-amino-acid polypeptide reads, in one-letter code: Muconate cycloisomerase 1 (374 aa).

The protein belongs to the cycloisomerase 2 family. As to quaternary structure, homotetramer.

It catalyses the reaction (S)-muconolactone = cis,cis-muconate + H(+). The protein operates within aromatic compound metabolism; beta-ketoadipate pathway; 5-oxo-4,5-dihydro-2-furylacetate from catechol: step 2/3. Its function is as follows. Catalyzes a syn cycloisomerization. The protein is Muconate cycloisomerase 1 of Cutaneotrichosporon cutaneum (Yeast).